Here is a 673-residue protein sequence, read N- to C-terminus: ATP-binding cassette sub-family G member 8 (673 aa).

A compositionally biased stretch (basic and acidic residues) spans 1–11; it reads MAGKAAEERGL. The interval 1-25 is disordered; sequence MAGKAAEERGLPKGATPQDTSGLQD. Residues 1-416 lie on the Cytoplasmic side of the membrane; it reads MAGKAAEERG…ISNDFRDLPT (416 aa). Residues 47 to 313 form the ABC transporter domain; the sequence is LEVRDLNYQV…FTAIGYPCPR (267 aa). One can recognise an ABC transmembrane type-2 domain in the interval 411 to 665; sequence FRDLPTLLIH…VLYYVSLRFI (255 aa). A helical membrane pass occupies residues 417–437; that stretch reads LLIHGAEACLMSMTIGFLYFG. Over 438–447 the chain is Extracellular; that stretch reads HGSIQLSFMD. Residues 448-468 form a helical membrane-spanning segment; the sequence is TAALLFMIGALIPFNVILDVI. At 469 to 497 the chain is on the cytoplasmic side; sequence SKCYSERAMLYYELEDGLYTTGPYFFAKI. A helical membrane pass occupies residues 498–518; sequence LGELPEHCAYIIIYGMPTYWL. At 519-527 the chain is on the extracellular side; sequence ANLRPGLQP. Residues 528 to 548 traverse the membrane as a helical segment; the sequence is FLLHFLLVWLVVFCCRIMALA. At 549–555 the chain is on the cytoplasmic side; sequence AAALLPT. Residues 556-576 form a helical membrane-spanning segment; it reads FHMASFFSNALYNSFYLAGGF. Residues 577 to 639 are Extracellular-facing; the sequence is MINLSSLWTV…LSVMELDSYP (63 aa). Residue N619 is glycosylated (N-linked (GlcNAc...) asparagine). A helical membrane pass occupies residues 640 to 660; it reads LYAIYLIVIGLSGGFMVLYYV. The Cytoplasmic segment spans residues 661 to 673; it reads SLRFIKQKPSQDW.

It belongs to the ABC transporter superfamily. ABCG family. Eye pigment precursor importer (TC 3.A.1.204) subfamily. As to quaternary structure, heterodimer with ABCG8. Mg(2+) serves as cofactor. N-glycosylated. Predominantly expressed in the liver. Low expression levels in the small intestine and colon. Very low levels in other tissues, including brain, heart and spleen.

The protein resides in the cell membrane. It is found in the apical cell membrane. The enzyme catalyses cholesterol(in) + ATP + H2O = cholesterol(out) + ADP + phosphate + H(+). It catalyses the reaction sitosterol(in) + ATP + H2O = sitosterol(out) + ADP + phosphate + H(+). Its activity is regulated as follows. The ATPase activity of the heterodimer is stimulated by cholate. Taurocholate, glycocholate, taurochenodeoxycholate, glycochenodeoxycholate and taurodeoxycholate also stimulate ATPase activity, but to a lower degree. Glycodeoxycholate has no significant effect on ATPase activity. ATPase activity is inhibited by vanadate and by berillium fluoride. Functionally, ABCG5 and ABCG8 form an obligate heterodimer that mediates Mg(2+)- and ATP-dependent sterol transport across the cell membrane. Plays an essential role in the selective transport of the dietary cholesterol in and out of the enterocytes and in the selective sterol excretion by the liver into bile. Required for normal sterol homeostasis. The heterodimer with ABCG5 has ATPase activity. The polypeptide is ATP-binding cassette sub-family G member 8 (Homo sapiens (Human)).